Here is a 291-residue protein sequence, read N- to C-terminus: Kynurenine formamidase (291 aa).

The short motif at 33–37 is the HGGXW element; sequence HGGAW. Ser-107 serves as the catalytic Nucleophile. Residues Asp-242 and His-280 contribute to the active site.

This sequence belongs to the kynurenine formamidase family. As to quaternary structure, homodimer.

The enzyme catalyses N-formyl-L-kynurenine + H2O = L-kynurenine + formate + H(+). It participates in amino-acid degradation; L-tryptophan degradation via kynurenine pathway; L-kynurenine from L-tryptophan: step 2/2. Catalyzes the hydrolysis of N-formyl-L-kynurenine to L-kynurenine, the second step in the kynurenine pathway of tryptophan degradation. Kynurenine may be further oxidized to nicotinic acid, NAD(H) and NADP(H). Required for elimination of toxic metabolites. In Debaryomyces hansenii (strain ATCC 36239 / CBS 767 / BCRC 21394 / JCM 1990 / NBRC 0083 / IGC 2968) (Yeast), this protein is Kynurenine formamidase.